The primary structure comprises 474 residues: MHLLQCLLSTISLASTVTAFVPYSFNLEVSTEGPPSNDVARRFVPWKLLLDDSYNNHGSSSNGVSLTLDLKKFPVRRDNKYKVVLADEPTTPNTAALNQEGLDYSYFATVRVGSQGQQMWLVLDTGGPNTWVFGSDCTTVACQRHETFGEAASKSLKLLPLNWAVGYGTGLVSGVLGTDSLSLAGLDVNMTFGLAKNASTDFESYPVDGILGLGRSANSNFNTPSFMETVATQRLLKSNIIGFSFSRNSDGARDGAANFGDLDTTRFTGDIVYTNTTGDSNNWRIPLDDASVNGTPCRFVNKTAVIDTGTSYAMLPPKDATVLHNLIPGAVTTSHGQNFTLPCNSTAVVQVSFSGLSYNISPKDYVGPAYGSACLSTIVGQALYGDDVWLLGDVFLKNVYSVFDYDNHRIGFANRSVPIASPTTTVAAAANPSATDGAGSTLTGSMAVHTGSASIVSRFVHWPFIFALLCMVLV.

Positions 1–19 (MHLLQCLLSTISLASTVTA) are cleaved as a signal peptide. The region spanning 106–413 (YFATVRVGSQ…DYDNHRIGFA (308 aa)) is the Peptidase A1 domain. D124 is an active-site residue. N189, N197, N275, and N301 each carry an N-linked (GlcNAc...) asparagine glycan. D307 is an active-site residue. N338, N344, and N414 each carry an N-linked (GlcNAc...) asparagine glycan. S452 carries GPI-anchor amidated serine lipidation. Positions 453–474 (ASIVSRFVHWPFIFALLCMVLV) are cleaved as a propeptide — removed in mature form.

Belongs to the peptidase A1 family.

It localises to the cell membrane. Secreted aspartic-type endopeptidase which is secreted and contributes to virulence. This is Aspartic-type endopeptidase ctsD (ctsD) from Aspergillus fumigatus (strain ATCC MYA-4609 / CBS 101355 / FGSC A1100 / Af293) (Neosartorya fumigata).